Reading from the N-terminus, the 61-residue chain is Defensin BmKDfsin1 (61 aa).

The N-terminal stretch at 1–25 (MKTIVLLFVLVLVFALLVKMGMVEA) is a signal peptide. 3 disulfides stabilise this stretch: cysteine 29-cysteine 50, cysteine 36-cysteine 58, and cysteine 40-cysteine 60.

This sequence belongs to the invertebrate defensin family. Type 2 subfamily. Highly expressed in non-venom gland (hemolymph) and moderately expressed in venom gland.

It localises to the secreted. Antibacterial peptide active against Gram-positive bacteria, but not on Gram-negative bacteria. Also has weak blocking activity on Kv1.1/KCNA1, Kv1.2/KCNA2, Kv1.3/KCNA3, KCa3.1/KCNN4/IK, KCa2.3/KCNN3/SK3 and Kv11.1/KCNH2/ERG1 channels (tested at 1 uM). It inhibits potassium channel current by interacting with the pore region. This chain is Defensin BmKDfsin1, found in Olivierus martensii (Manchurian scorpion).